A 1248-amino-acid chain; its full sequence is ABC transporter B family member 7 (1248 aa).

A run of 6 helical transmembrane segments spans residues 32 to 52 (IVLM…QPFM), 82 to 102 (FLYL…CWMV), 158 to 175 (FTQL…AFIV), 179 to 201 (LTLA…TYIM), 261 to 281 (GLGI…AIWY), and 299 to 321 (VITS…NSFA). In terms of domain architecture, ABC transmembrane type-1 1 spans 35-322 (MVIGTLSAMA…TLPSLNSFAA (288 aa)). Residues 357–593 (IELRDVYFRY…PEGTYSQLVR (237 aa)) enclose the ABC transporter 1 domain. 392–399 (GQSGSGKS) is a binding site for ATP. N-linked (GlcNAc...) asparagine glycosylation is found at Asn-473 and Asn-652. The chain crosses the membrane as a helical span at residues 682–702 (VLLLGSLAAVIHGIVFPVQGL). The 288-residue stretch at 683-970 (LLLGSLAAVI…TSTMAPDINK (288 aa)) folds into the ABC transmembrane type-1 2 domain. The N-linked (GlcNAc...) asparagine glycan is linked to Asn-720. The helical transmembrane segment at 722 to 742 (SLFWALIFVALGLTDLIVIPL) threads the bilayer. Asn-779 carries an N-linked (GlcNAc...) asparagine glycan. 4 helical membrane passes run 813 to 833 (IIGA…MALL), 834 to 854 (VAPV…GFGA), 914 to 934 (GSYL…SWLI), and 939 to 959 (ATFG…VGVT). Positions 1005–1242 (IELQHVSFRY…SGGAYASLVA (238 aa)) constitute an ABC transporter 2 domain. ATP is bound at residue 1040–1047 (GESGSGKS). Asn-1094, Asn-1193, and Asn-1244 each carry an N-linked (GlcNAc...) asparagine glycan.

The protein belongs to the ABC transporter superfamily. ABCB family. Multidrug resistance exporter (TC 3.A.1.201) subfamily.

The protein localises to the membrane. This chain is ABC transporter B family member 7 (ABCB7), found in Arabidopsis thaliana (Mouse-ear cress).